Consider the following 541-residue polypeptide: Membrane protein insertase YidC (541 aa).

Helical transmembrane passes span 7-27, 345-365, 415-435, 453-473, and 492-512; these read LLFMALLFISFLIYQQWQVDY, LVQNWGLAIIGVTLVVKAVLY, LGGCLPILLQMPIFIALYWTF, LSAQDPYFILPILMGASMFLL, and FMPLIFMVFFLFFPAGLVLYW.

This sequence belongs to the OXA1/ALB3/YidC family. Type 1 subfamily. As to quaternary structure, interacts with the Sec translocase complex via SecD. Specifically interacts with transmembrane segments of nascent integral membrane proteins during membrane integration.

The protein resides in the cell inner membrane. In terms of biological role, required for the insertion and/or proper folding and/or complex formation of integral membrane proteins into the membrane. Involved in integration of membrane proteins that insert both dependently and independently of the Sec translocase complex, as well as at least some lipoproteins. Aids folding of multispanning membrane proteins. This chain is Membrane protein insertase YidC, found in Histophilus somni (strain 2336) (Haemophilus somnus).